We begin with the raw amino-acid sequence, 252 residues long: Small ribosomal subunit protein uS3 (252 aa).

The 69-residue stretch at 38-106 (IRKYIHARLS…EVQINIFEIK (69 aa)) folds into the KH type-2 domain. The interval 214–252 (PLAGMDKKQSGTGGGKGGDAPRGKSNFNKGGKPDARKRK) is disordered. A compositionally biased stretch (gly residues) spans 224 to 233 (GTGGGKGGDA).

Belongs to the universal ribosomal protein uS3 family. Part of the 30S ribosomal subunit. Forms a tight complex with proteins S10 and S14.

Its function is as follows. Binds the lower part of the 30S subunit head. Binds mRNA in the 70S ribosome, positioning it for translation. The sequence is that of Small ribosomal subunit protein uS3 from Flavobacterium johnsoniae (strain ATCC 17061 / DSM 2064 / JCM 8514 / BCRC 14874 / CCUG 350202 / NBRC 14942 / NCIMB 11054 / UW101) (Cytophaga johnsonae).